The sequence spans 309 residues: HPr kinase/phosphorylase (309 aa).

Catalysis depends on residues histidine 138 and lysine 159. Residue 153 to 160 participates in ATP binding; the sequence is GDSGIGKS. Serine 160 contributes to the Mg(2+) binding site. Aspartate 177 (proton acceptor; for phosphorylation activity. Proton donor; for dephosphorylation activity) is an active-site residue. The segment at 201–210 is important for the catalytic mechanism of both phosphorylation and dephosphorylation; the sequence is LEIRGVGIID. Glutamate 202 provides a ligand contact to Mg(2+). Arginine 243 is a catalytic residue. Residues 264–269 form an important for the catalytic mechanism of dephosphorylation region; that stretch reads PVKTGR.

It belongs to the HPrK/P family. In terms of assembly, homohexamer. Mg(2+) is required as a cofactor.

It catalyses the reaction [HPr protein]-L-serine + ATP = [HPr protein]-O-phospho-L-serine + ADP + H(+). It carries out the reaction [HPr protein]-O-phospho-L-serine + phosphate + H(+) = [HPr protein]-L-serine + diphosphate. In terms of biological role, catalyzes the ATP- as well as the pyrophosphate-dependent phosphorylation of a specific serine residue in HPr, a phosphocarrier protein of the phosphoenolpyruvate-dependent sugar phosphotransferase system (PTS). HprK/P also catalyzes the pyrophosphate-producing, inorganic phosphate-dependent dephosphorylation (phosphorolysis) of seryl-phosphorylated HPr (P-Ser-HPr). The two antagonistic activities of HprK/P are regulated by several intracellular metabolites, which change their concentration in response to the absence or presence of rapidly metabolisable carbon sources (glucose, fructose, etc.) in the growth medium. Therefore, by controlling the phosphorylation state of HPr, HPrK/P is a sensor enzyme that plays a major role in the regulation of carbon metabolism and sugar transport: it mediates carbon catabolite repression (CCR), and regulates PTS-catalyzed carbohydrate uptake and inducer exclusion. The sequence is that of HPr kinase/phosphorylase from Streptococcus thermophilus (strain ATCC BAA-491 / LMD-9).